We begin with the raw amino-acid sequence, 584 residues long: MDMIKPDFQQIRRDKFRVEQMNDFPNTWTQQQHQNIRIPNNLDLIGILQNQISVPVQTDLYQDSAATFMNMPQSIHRDPQGPSNWRISDLSQPSTVNHGYDQAGIRPNNVADLLSDHFSSRNQILDRPLYVGRDSIPQSSMIRRSEVSCLDDNQKGCVTVACSGTGNEILRSSYDQGSSSGSYRGEFSFLPSLENQSVAHNASNWNHGPVNVTATSHTNSKKGFPLSLLSDIPPSRDVGNAAVLSTMNIHGPLGPFTGYASILKSSRFLEPAQKMLEEFCISYASKIISRSESTSMEDDDDDDDNLSGFSSSSEPLEPKNRLKKAKLLFLQEEVCKWYKLYNHQLQTVMSSFNTVAGLNTATPYISLALKRTSRSFKALRTAIAEHVKQISSHSSNGNNNNRFQKRQRSLIGNNVGFESQQQHIWRPQRGLPERAVAVLRAWLFDHFLHPYPTDSDKQMLATQTGLSRNQVSNWFINARVRLWKPMVEEIHTLETKAIKNADTSHNIEPSNRPNTVSSPSHEQTLTGLSGTKRSRLEYMDMVGFNRGNVSLTLELRRGVDNVIQTQTQDHQFGTGSQMFHDFVG.

Positions 266-282 (SRFLEPAQKMLEEFCIS) are SR/KY domain. The disordered stretch occupies residues 292 to 317 (ESTSMEDDDDDDDNLSGFSSSSEPLE). Residues 295-305 (SMEDDDDDDDN) are compositionally biased toward acidic residues. Positions 316–387 (LEPKNRLKKA…ALRTAIAEHV (72 aa)) are BELL domain. Residues 424 to 486 (IWRPQRGLPE…NARVRLWKPM (63 aa)) constitute a DNA-binding region (homeobox). The disordered stretch occupies residues 503-529 (TSHNIEPSNRPNTVSSPSHEQTLTGLS).

Belongs to the TALE/BELL homeobox family. As to quaternary structure, may form heterodimeric complex with the TALE/KNOX proteins STM and KNAT1/BP.

The protein localises to the nucleus. Its function is as follows. Required for specifying floral primordia and establishing early internode patterning events during inflorescence development. In Arabidopsis thaliana (Mouse-ear cress), this protein is BEL1-like homeodomain protein 8 (BLH8).